A 114-amino-acid polypeptide reads, in one-letter code: Large ribosomal subunit protein bL19 (114 aa).

It belongs to the bacterial ribosomal protein bL19 family.

In terms of biological role, this protein is located at the 30S-50S ribosomal subunit interface and may play a role in the structure and function of the aminoacyl-tRNA binding site. In Clavibacter sepedonicus (Clavibacter michiganensis subsp. sepedonicus), this protein is Large ribosomal subunit protein bL19.